The following is a 100-amino-acid chain: Aspartyl/glutamyl-tRNA(Asn/Gln) amidotransferase subunit C (100 aa).

Belongs to the GatC family. In terms of assembly, heterotrimer of A, B and C subunits.

It catalyses the reaction L-glutamyl-tRNA(Gln) + L-glutamine + ATP + H2O = L-glutaminyl-tRNA(Gln) + L-glutamate + ADP + phosphate + H(+). The enzyme catalyses L-aspartyl-tRNA(Asn) + L-glutamine + ATP + H2O = L-asparaginyl-tRNA(Asn) + L-glutamate + ADP + phosphate + 2 H(+). In terms of biological role, allows the formation of correctly charged Asn-tRNA(Asn) or Gln-tRNA(Gln) through the transamidation of misacylated Asp-tRNA(Asn) or Glu-tRNA(Gln) in organisms which lack either or both of asparaginyl-tRNA or glutaminyl-tRNA synthetases. The reaction takes place in the presence of glutamine and ATP through an activated phospho-Asp-tRNA(Asn) or phospho-Glu-tRNA(Gln). This Corynebacterium aurimucosum (strain ATCC 700975 / DSM 44827 / CIP 107346 / CN-1) (Corynebacterium nigricans) protein is Aspartyl/glutamyl-tRNA(Asn/Gln) amidotransferase subunit C.